Consider the following 478-residue polypeptide: Lipoprotein lipase (478 aa).

The first 27 residues, 1 to 27, serve as a signal peptide directing secretion; the sequence is MESKVLLLLALSVWLQSLTVSRGGLVA. The interaction with GPIHBP1 stretch occupies residues 35-56; sequence KDFRDIESKFALRTPEDTAEDT. An intrachain disulfide couples C57 to C70. The N-linked (GlcNAc...) asparagine glycan is linked to N73. Y124 is subject to 3'-nitrotyrosine. The Nucleophile role is filled by S162. Catalysis depends on D186, which acts as the Charge relay system. Y194 is modified (3'-nitrotyrosine). Ca(2+) contacts are provided by A197, R200, S202, and D205. The cysteines at positions 246 and 269 are disulfide-linked. The essential for determining substrate specificity stretch occupies residues 246-269; it reads CNIGEALRVIAERGLGDVDQLVKC. The active-site Charge relay system is the H271. Cystine bridges form between C294–C313 and C305–C308. In terms of domain architecture, PLAT spans 344-467; it reads FHYQVKIHFS…KGKSPVIFVK (124 aa). 3'-nitrotyrosine is present on Y346. An N-linked (GlcNAc...) asparagine glycan is attached at N389. The tract at residues 420-424 is important for interaction with lipoprotein particles; it reads WSNWW. Residues 433–437 are important for heparin binding; that stretch reads KIRVK. The segment at 446-470 is interaction with GPIHBP1; it reads IFCSREKMSYLQKGKSPVIFVKCHD. C448 and C468 are disulfide-bonded.

This sequence belongs to the AB hydrolase superfamily. Lipase family. As to quaternary structure, homodimer. Interacts with GPIHBP1 with 1:1 stoichiometry. Interacts with APOC2; the interaction activates LPL activity in the presence of lipids. Interaction with heparan sulfate proteoglycans is required to protect LPL against loss of activity. Associates with lipoprotein particles in blood plasma. Interacts with LMF1 and SEL1L; interaction with SEL1L is required to prevent aggregation of newly synthesized LPL in the endoplasmic reticulum (ER), and for normal export of LPL from the ER to the extracellular space. Interacts with SORL1; SORL1 acts as a sorting receptor, promoting LPL localization to endosomes and later to lysosomes, leading to degradation of newly synthesized LPL. In terms of processing, tyrosine nitration after lipopolysaccharide (LPS) challenge down-regulates the lipase activity.

The protein localises to the cell membrane. The protein resides in the secreted. It is found in the extracellular space. Its subcellular location is the extracellular matrix. The catalysed reaction is a triacylglycerol + H2O = a diacylglycerol + a fatty acid + H(+). The enzyme catalyses a 1,2-diacyl-sn-glycero-3-phosphocholine + H2O = a 2-acyl-sn-glycero-3-phosphocholine + a fatty acid + H(+). It catalyses the reaction 1,2,3-tri-(9Z-octadecenoyl)-glycerol + H2O = di-(9Z)-octadecenoylglycerol + (9Z)-octadecenoate + H(+). It carries out the reaction 1,2-di-(9Z-octadecenoyl)-sn-glycero-3-phosphocholine + H2O = (9Z-octadecenoyl)-sn-glycero-3-phosphocholine + (9Z)-octadecenoate + H(+). The catalysed reaction is 1,2,3-tributanoylglycerol + H2O = dibutanoylglycerol + butanoate + H(+). The enzyme catalyses 1,2-dihexadecanoyl-sn-glycero-3-phosphocholine + H2O = hexadecanoyl-sn-glycero-3-phosphocholine + hexadecanoate + H(+). The apolipoprotein APOC2 acts as a coactivator of LPL activity. Ca(2+) binding promotes protein stability and formation of the active homodimer. Interaction with GPIHBP1 protects LPL against inactivation by ANGPTL4. In terms of biological role, key enzyme in triglyceride metabolism. Catalyzes the hydrolysis of triglycerides from circulating chylomicrons and very low density lipoproteins (VLDL), and thereby plays an important role in lipid clearance from the blood stream, lipid utilization and storage. Although it has both phospholipase and triglyceride lipase activities it is primarily a triglyceride lipase with low but detectable phospholipase activity. Mediates margination of triglyceride-rich lipoprotein particles in capillaries. Recruited to its site of action on the luminal surface of vascular endothelium by binding to GPIHBP1 and cell surface heparan sulfate proteoglycans. This Ovis aries (Sheep) protein is Lipoprotein lipase (LPL).